A 759-amino-acid chain; its full sequence is Mitogen-activated protein kinase kinase kinase 1a (759 aa).

Composition is skewed to basic and acidic residues over residues 1 to 17, 25 to 36, and 52 to 64; these read MIEERGSSRGSREDRGS, SFEDKGSSHDWK, and AKKDRNYDAKVDS. Disordered stretches follow at residues 1 to 90, 122 to 160, 165 to 184, and 195 to 239; these read MIEE…NLSK, LGIEASDWESRRKSAVYSRPTSPPRVSHDTGQSSYSHDF, SRVDSSLESPPLSPRGLAPM, and RKHR…PDPL. Residues 72–85 are compositionally biased toward low complexity; it reads VHSTSSPRLSPASS. Residues 426–679 form the Protein kinase domain; the sequence is WAKGEFLGSG…CDMLLAHPFI (254 aa). ATP is bound by residues 432 to 440 and lysine 454; that span reads LGSGTFGSV. Residue aspartate 549 is the Proton acceptor of the active site.

The protein belongs to the protein kinase superfamily. STE Ser/Thr protein kinase family. MAP kinase kinase kinase subfamily.

The protein resides in the cell membrane. It carries out the reaction L-seryl-[protein] + ATP = O-phospho-L-seryl-[protein] + ADP + H(+). It catalyses the reaction L-threonyl-[protein] + ATP = O-phospho-L-threonyl-[protein] + ADP + H(+). In terms of biological role, the CERK1, MEKK1a/b, MKK1a/b/c and MPK4a/b proteins are involved in pathogen defense. The pathway induces rapid growth inhibition, cell wall depositions and accumulation of defense-related transcripts. This protein is required for responses to chitin and acts redundantly with MEKK1b. The chain is Mitogen-activated protein kinase kinase kinase 1a from Physcomitrium patens (Spreading-leaved earth moss).